Consider the following 151-residue polypeptide: UPF0179 protein MJ1627 (151 aa).

Belongs to the UPF0179 family.

The polypeptide is UPF0179 protein MJ1627 (Methanocaldococcus jannaschii (strain ATCC 43067 / DSM 2661 / JAL-1 / JCM 10045 / NBRC 100440) (Methanococcus jannaschii)).